The sequence spans 219 residues: PKHD-type hydroxylase AM1_3707 (219 aa).

The Fe2OG dioxygenase domain maps to 78–172 (SIHTLLFSRY…RLVAVGWVQS (95 aa)). Fe cation contacts are provided by His-96, Asp-98, and His-153. Arg-163 is a 2-oxoglutarate binding site.

Fe(2+) is required as a cofactor. The cofactor is L-ascorbate.

The polypeptide is PKHD-type hydroxylase AM1_3707 (Acaryochloris marina (strain MBIC 11017)).